Reading from the N-terminus, the 83-residue chain is Small ribosomal subunit protein bS20 (83 aa).

This sequence belongs to the bacterial ribosomal protein bS20 family.

In terms of biological role, binds directly to 16S ribosomal RNA. The polypeptide is Small ribosomal subunit protein bS20 (Staphylococcus haemolyticus (strain JCSC1435)).